Here is an 853-residue protein sequence, read N- to C-terminus: Trimethylguanosine synthase (853 aa).

The tract at residues 53–80 (NNSGDQATEEEEGGYSCGTAESHDSKGI) is disordered. S55 is modified (phosphoserine). T60 is subject to Phosphothreonine. Residues S85, S89, S96, and S141 each carry the phosphoserine modification. Y146 is subject to Phosphotyrosine. Residues 149–187 (DDILASDDPSSIEQYENTRTYELQSKKDTETENPPVENT) form a disordered region. Residue S154 is modified to Phosphoserine. Residues 156–171 (DPSSIEQYENTRTYEL) are compositionally biased toward polar residues. S189 is modified (phosphoserine). Disordered stretches follow at residues 334–461 (SQLD…GGIP) and 527–632 (DEEA…KKVN). The span at 367 to 382 (NGGTNEESNSSGNTNT) shows a compositional bias: low complexity. S412, S438, and S578 each carry phosphoserine. Acidic residues predominate over residues 431–442 (DIDENPASDFDD). Polar residues predominate over residues 564 to 578 (ETNNPEPEKCQSVSS). The segment covering 608–619 (PDSRQAETEAEV) has biased composition (basic and acidic residues). Residues 620–630 (KKKKNKKKNKK) show a composition bias toward basic residues. The interval 631–846 (VNGLPPEIAA…TITAYFGDLI (216 aa)) is sufficient for catalytic activity. D719 is a binding site for S-adenosyl-L-methionine. Residue W766 participates in N(7)-methylguanosine binding.

It belongs to the methyltransferase superfamily. Trimethylguanosine synthase family. As to quaternary structure, may form homooligomers. Interacts with CREBBP/CBP, EED/WAIT1, EP300/P300, NCOA6/PRIP, PPARBP/PBP and SMN. Ubiquitously expressed. High expression in heart, skeletal muscle, kidney, liver and placenta.

Its subcellular location is the cytoplasm. The protein localises to the nucleus. It localises to the cajal body. It is found in the nucleolus. The catalysed reaction is a 5'-end (N(7)-methyl 5'-triphosphoguanosine)-ribonucleoside in snRNA + S-adenosyl-L-methionine = a 5'-end (N(2),N(7)-dimethyl 5'-triphosphoguanosine)-ribonucleoside in snRNA + S-adenosyl-L-homocysteine + H(+). It carries out the reaction a 5'-end (N(7)-methyl 5'-triphosphoguanosine)-ribonucleoside in snoRNA + S-adenosyl-L-methionine = a 5'-end (N(2),N(7)-dimethyl 5'-triphosphoguanosine)-ribonucleoside in snoRNA + S-adenosyl-L-homocysteine + H(+). The enzyme catalyses a 5'-end (N(2),N(7)-dimethyl 5'-triphosphoguanosine)-ribonucleoside in snRNA + S-adenosyl-L-methionine = a 5'-end (N(2),N(2),N(7)-trimethyl 5'-triphosphoguanosine)-ribonucleoside in snRNA + S-adenosyl-L-homocysteine + H(+). It catalyses the reaction a 5'-end (N(2),N(7)-dimethyl 5'-triphosphoguanosine)-ribonucleoside in snoRNA + S-adenosyl-L-methionine = a 5'-end (N(2),N(2),N(7)-trimethyl 5'-triphosphoguanosine)-ribonucleoside in snoRNA + S-adenosyl-L-homocysteine + H(+). Functionally, catalyzes the 2 serial methylation steps for the conversion of the 7-monomethylguanosine (m(7)G) caps of snRNAs and snoRNAs to a 2,2,7-trimethylguanosine (m(2,2,7)G) cap structure. The enzyme is specific for guanine, and N7 methylation must precede N2 methylation. Hypermethylation of the m7G cap of U snRNAs leads to their concentration in nuclear foci, their colocalization with coilin and the formation of canonical Cajal bodies (CBs). Plays a role in transcriptional regulation. This is Trimethylguanosine synthase (TGS1) from Homo sapiens (Human).